The primary structure comprises 276 residues: Sulfur carrier protein FdhD (276 aa).

Cys-122 functions as the Cysteine persulfide intermediate in the catalytic mechanism. 259–264 contacts Mo-bis(molybdopterin guanine dinucleotide); sequence FCRRGR.

It belongs to the FdhD family.

The protein localises to the cytoplasm. In terms of biological role, required for formate dehydrogenase (FDH) activity. Acts as a sulfur carrier protein that transfers sulfur from IscS to the molybdenum cofactor prior to its insertion into FDH. In Proteus mirabilis (strain HI4320), this protein is Sulfur carrier protein FdhD.